Here is a 447-residue protein sequence, read N- to C-terminus: Argininosuccinate synthase (447 aa).

ATP contacts are provided by residues 17–25 (AFSGGLDTS) and alanine 43. Tyrosine 99 contributes to the L-citrulline binding site. Residues glycine 129 and threonine 131 each coordinate ATP. L-aspartate contacts are provided by threonine 131, asparagine 135, and aspartate 136. L-citrulline is bound at residue asparagine 135. ATP is bound at residue aspartate 136. Residues arginine 139 and serine 192 each contribute to the L-citrulline site. ATP is bound at residue aspartate 194. The L-citrulline site is built by threonine 201, glutamate 203, and glutamate 280.

Belongs to the argininosuccinate synthase family. Type 2 subfamily. In terms of assembly, homotetramer.

The protein resides in the cytoplasm. It carries out the reaction L-citrulline + L-aspartate + ATP = 2-(N(omega)-L-arginino)succinate + AMP + diphosphate + H(+). It functions in the pathway amino-acid biosynthesis; L-arginine biosynthesis; L-arginine from L-ornithine and carbamoyl phosphate: step 2/3. The sequence is that of Argininosuccinate synthase (argG) from Escherichia coli O157:H7.